Here is a 271-residue protein sequence, read N- to C-terminus: Pyrroline-5-carboxylate reductase (271 aa).

Belongs to the pyrroline-5-carboxylate reductase family.

The protein resides in the cytoplasm. It catalyses the reaction L-proline + NADP(+) = (S)-1-pyrroline-5-carboxylate + NADPH + 2 H(+). The enzyme catalyses L-proline + NAD(+) = (S)-1-pyrroline-5-carboxylate + NADH + 2 H(+). It participates in amino-acid biosynthesis; L-proline biosynthesis; L-proline from L-glutamate 5-semialdehyde: step 1/1. Its function is as follows. Catalyzes the reduction of 1-pyrroline-5-carboxylate (PCA) to L-proline. The chain is Pyrroline-5-carboxylate reductase from Staphylococcus haemolyticus (strain JCSC1435).